The following is a 230-amino-acid chain: NAD(P)H-hydrate epimerase (230 aa).

The region spanning 11-218 (AIAVDQELFN…ALQRKYELNL (208 aa)) is the YjeF N-terminal domain. 61–65 (NNGGD) serves as a coordination point for (6S)-NADPHX. Positions 62 and 126 each coordinate K(+). (6S)-NADPHX contacts are provided by residues 130–136 (GFSFKPP) and Asp159. Residue Ser162 coordinates K(+).

It belongs to the NnrE/AIBP family. The cofactor is K(+).

The catalysed reaction is (6R)-NADHX = (6S)-NADHX. It catalyses the reaction (6R)-NADPHX = (6S)-NADPHX. Functionally, catalyzes the epimerization of the S- and R-forms of NAD(P)HX, a damaged form of NAD(P)H that is a result of enzymatic or heat-dependent hydration. This is a prerequisite for the S-specific NAD(P)H-hydrate dehydratase to allow the repair of both epimers of NAD(P)HX. This is NAD(P)H-hydrate epimerase from Drosophila sechellia (Fruit fly).